Here is a 106-residue protein sequence, read N- to C-terminus: Large ribosomal subunit protein eL42 (106 aa).

The segment at 37–56 is disordered; sequence SQGKRRYDRKQSGYGGQTKP.

This sequence belongs to the eukaryotic ribosomal protein eL42 family.

In Pichia kudriavzevii (Yeast), this protein is Large ribosomal subunit protein eL42 (RPL44).